We begin with the raw amino-acid sequence, 416 residues long: Probable intermembrane transport protein HI_1671 (416 aa).

A run of 8 helical transmembrane segments spans residues I62–I82, I107–L127, V138–L158, E172–I192, L263–L283, F306–M326, L347–L367, and I377–M397.

This sequence belongs to the PqiA family.

Its subcellular location is the cell inner membrane. This is Probable intermembrane transport protein HI_1671 from Haemophilus influenzae (strain ATCC 51907 / DSM 11121 / KW20 / Rd).